The chain runs to 87 residues: RNA-binding protein Hfq (87 aa).

The region spanning 9-68 (DPFLNALRRERIPVSIYLVNGIKLQGQIESFDQFVILLKNTVSQMVYKHAISTVVPARAV) is the Sm domain.

The protein belongs to the Hfq family. Homohexamer.

RNA chaperone that binds small regulatory RNA (sRNAs) and mRNAs to facilitate mRNA translational regulation in response to envelope stress, environmental stress and changes in metabolite concentrations. Also binds with high specificity to tRNAs. This is RNA-binding protein Hfq from Aeromonas hydrophila subsp. hydrophila (strain ATCC 7966 / DSM 30187 / BCRC 13018 / CCUG 14551 / JCM 1027 / KCTC 2358 / NCIMB 9240 / NCTC 8049).